A 39-amino-acid polypeptide reads, in one-letter code: Photosystem II reaction center protein L (39 aa).

A helical membrane pass occupies residues 18–38 (SLYLGLLLVFVLGILFSSYFF).

This sequence belongs to the PsbL family. PSII is composed of 1 copy each of membrane proteins PsbA, PsbB, PsbC, PsbD, PsbE, PsbF, PsbH, PsbI, PsbJ, PsbK, PsbL, PsbM, PsbT, PsbX, PsbY, Psb30/Ycf12, peripheral proteins PsbO, CyanoQ (PsbQ), PsbU, PsbV and a large number of cofactors. It forms dimeric complexes.

It is found in the cellular thylakoid membrane. Functionally, one of the components of the core complex of photosystem II (PSII). PSII is a light-driven water:plastoquinone oxidoreductase that uses light energy to abstract electrons from H(2)O, generating O(2) and a proton gradient subsequently used for ATP formation. It consists of a core antenna complex that captures photons, and an electron transfer chain that converts photonic excitation into a charge separation. This subunit is found at the monomer-monomer interface and is required for correct PSII assembly and/or dimerization. The polypeptide is Photosystem II reaction center protein L (Prochlorococcus marinus (strain SARG / CCMP1375 / SS120)).